The following is a 511-amino-acid chain: MGRLALISVTDKTGIVDFARQLTEEFDFEIISSGGTAKTLQSAGIPVIKVGEYTGSPEILGGRVKTLHPRIHGGILARRDWQSDLAEMEANQIRPFDLVVVNLYPFEQTIANPDVTTAQAIEQIDIGGPAMLRASAKNFAHLTVISNPKYYEQYLSQLRQNNGEISLEFRQKMAGETFALTNAYDGAIAAYFASLNGETTRFNLAGNALQTLRYGENPHQSATWYGSGTMAQGWGKATLLQGKELSYNNLVDLEAARRLIAEFGSEEPAAAILKHTNPCGVAIGGSLVEAYTKAFNADAISAFGGIVALNQAIDEATAKELTKTFLECVVAPDCSPEAQDILAKKSKVRILLLPDLTTGEKQTVKVIAGGFLVQAADDVVETPDEWRVVTEKQPTPAQLAELLFAWKVSKHVKSNAIVVTKNQTTLGVGAGQMNRVGSVKIALEQAAEAAKGGYLASDGFFPFDDSVRTAAQFGIEAIVQPGGSLKDQDSINAANELGLIMVLTGIRHFLH.

The MGS-like domain maps to 1 to 146 (MGRLALISVT…KNFAHLTVIS (146 aa)).

It belongs to the PurH family.

It catalyses the reaction (6R)-10-formyltetrahydrofolate + 5-amino-1-(5-phospho-beta-D-ribosyl)imidazole-4-carboxamide = 5-formamido-1-(5-phospho-D-ribosyl)imidazole-4-carboxamide + (6S)-5,6,7,8-tetrahydrofolate. It carries out the reaction IMP + H2O = 5-formamido-1-(5-phospho-D-ribosyl)imidazole-4-carboxamide. Its pathway is purine metabolism; IMP biosynthesis via de novo pathway; 5-formamido-1-(5-phospho-D-ribosyl)imidazole-4-carboxamide from 5-amino-1-(5-phospho-D-ribosyl)imidazole-4-carboxamide (10-formyl THF route): step 1/1. It participates in purine metabolism; IMP biosynthesis via de novo pathway; IMP from 5-formamido-1-(5-phospho-D-ribosyl)imidazole-4-carboxamide: step 1/1. In Microcystis aeruginosa (strain NIES-843 / IAM M-2473), this protein is Bifunctional purine biosynthesis protein PurH.